Reading from the N-terminus, the 229-residue chain is 7-cyano-7-deazaguanine synthase (229 aa).

Residue 12–22 participates in ATP binding; it reads LSGGMDSCVCA. Zn(2+) contacts are provided by cysteine 194, cysteine 202, cysteine 205, and cysteine 208.

It belongs to the QueC family. The cofactor is Zn(2+).

It catalyses the reaction 7-carboxy-7-deazaguanine + NH4(+) + ATP = 7-cyano-7-deazaguanine + ADP + phosphate + H2O + H(+). The protein operates within purine metabolism; 7-cyano-7-deazaguanine biosynthesis. Functionally, catalyzes the ATP-dependent conversion of 7-carboxy-7-deazaguanine (CDG) to 7-cyano-7-deazaguanine (preQ(0)). This chain is 7-cyano-7-deazaguanine synthase, found in Acidobacterium capsulatum (strain ATCC 51196 / DSM 11244 / BCRC 80197 / JCM 7670 / NBRC 15755 / NCIMB 13165 / 161).